The sequence spans 542 residues: CTP synthase (542 aa).

Positions 1 to 265 are amidoligase domain; it reads MTRYIFVTGG…DEIIVERFGL (265 aa). Position 13 (Ser13) interacts with CTP. Residue Ser13 participates in UTP binding. ATP is bound by residues 14–19 and Asp71; that span reads SLGKGI. The Mg(2+) site is built by Asp71 and Glu139. CTP contacts are provided by residues 146–148, 186–191, and Lys222; these read DIE and KTKPTQ. UTP is bound by residues 186–191 and Lys222; that span reads KTKPTQ. Residues 290 to 541 form the Glutamine amidotransferase type-1 domain; the sequence is TIAMVGKYME…VRAALENAGG (252 aa). Position 351 (Gly351) interacts with L-glutamine. Cys378 functions as the Nucleophile; for glutamine hydrolysis in the catalytic mechanism. Residues 379–382, Glu402, and Arg469 each bind L-glutamine; that span reads LGLQ. Active-site residues include His514 and Glu516.

The protein belongs to the CTP synthase family. As to quaternary structure, homotetramer.

It catalyses the reaction UTP + L-glutamine + ATP + H2O = CTP + L-glutamate + ADP + phosphate + 2 H(+). The enzyme catalyses L-glutamine + H2O = L-glutamate + NH4(+). It carries out the reaction UTP + NH4(+) + ATP = CTP + ADP + phosphate + 2 H(+). It functions in the pathway pyrimidine metabolism; CTP biosynthesis via de novo pathway; CTP from UDP: step 2/2. Its activity is regulated as follows. Allosterically activated by GTP, when glutamine is the substrate; GTP has no effect on the reaction when ammonia is the substrate. The allosteric effector GTP functions by stabilizing the protein conformation that binds the tetrahedral intermediate(s) formed during glutamine hydrolysis. Inhibited by the product CTP, via allosteric rather than competitive inhibition. Its function is as follows. Catalyzes the ATP-dependent amination of UTP to CTP with either L-glutamine or ammonia as the source of nitrogen. Regulates intracellular CTP levels through interactions with the four ribonucleotide triphosphates. This Hahella chejuensis (strain KCTC 2396) protein is CTP synthase.